The primary structure comprises 75 residues: Small ribosomal subunit protein bS21 (75 aa).

The tract at residues 52–75 (RRARKLARKRAQREGLIGGRPGAR) is disordered. Basic residues predominate over residues 53-62 (RARKLARKRA).

The protein belongs to the bacterial ribosomal protein bS21 family.

In Brucella anthropi (strain ATCC 49188 / DSM 6882 / CCUG 24695 / JCM 21032 / LMG 3331 / NBRC 15819 / NCTC 12168 / Alc 37) (Ochrobactrum anthropi), this protein is Small ribosomal subunit protein bS21.